The primary structure comprises 224 residues: ATP-dependent dethiobiotin synthetase BioD (224 aa).

13–18 (NVGKTI) is an ATP binding site. Thr17 is a binding site for Mg(2+). Lys38 is an active-site residue. Residue Ser42 participates in substrate binding. ATP is bound by residues Asp55, 116–119 (EGAG), 176–177 (NN), and Asn211. Asp55 and Glu116 together coordinate Mg(2+).

This sequence belongs to the dethiobiotin synthetase family. In terms of assembly, homodimer. It depends on Mg(2+) as a cofactor.

The protein localises to the cytoplasm. It carries out the reaction (7R,8S)-7,8-diammoniononanoate + CO2 + ATP = (4R,5S)-dethiobiotin + ADP + phosphate + 3 H(+). It functions in the pathway cofactor biosynthesis; biotin biosynthesis; biotin from 7,8-diaminononanoate: step 1/2. Its function is as follows. Catalyzes a mechanistically unusual reaction, the ATP-dependent insertion of CO2 between the N7 and N8 nitrogen atoms of 7,8-diaminopelargonic acid (DAPA, also called 7,8-diammoniononanoate) to form a ureido ring. The sequence is that of ATP-dependent dethiobiotin synthetase BioD from Buchnera aphidicola subsp. Acyrthosiphon pisum (strain APS) (Acyrthosiphon pisum symbiotic bacterium).